Consider the following 48-residue polypeptide: FRGLAKLLKIGLKSFARVLKKVLPKAAKAGKALAKSMADENAIRQQNQ.

In terms of tissue distribution, expressed by the venom gland.

It localises to the secreted. The protein resides in the target cell membrane. In terms of biological role, disrupts cell membranes, particularly those rich in phosphocholine, through formation of pores. Has antimicrobial activity against Gram-negative bacterium E.coli, Gram-positive bacteria B.subtilis and S.aureus, and hemolytic activity against sheep, pig and guinea pig erythrocytes. Has insecticidal activity against S.frugiperda ovarian cells by opening non-selective ion channels. Enhances the insecticidal activity of spider venom neurotoxic peptides. The protein is M-oxotoxin-Ot1a of Oxyopes takobius (Lynx spider).